A 771-amino-acid polypeptide reads, in one-letter code: DNA helicase/primase complex-associated protein (771 aa).

The protein belongs to the herpesviridae HEPA family. Associates with the primase and the helicase to form the helicase-primase complex. Interacts with the origin-binding protein. Interacts with the polymerase catalytic subunit.

The protein resides in the host nucleus. Component of the helicase/primase complex. Unwinds the DNA at the replication forks and generates single-stranded DNA for both leading and lagging strand synthesis. The primase synthesizes short RNA primers on the lagging strand that the polymerase presumably elongates using dNTPs. The primase-associated factor has no known catalytic activity in the complex and may serve to facilitate the formation of the replisome by directly interacting with the origin-binding protein and the polymerase. This Homo sapiens (Human) protein is DNA helicase/primase complex-associated protein.